The chain runs to 141 residues: Small ribosomal subunit protein bS6 (141 aa).

Positions 96–141 are disordered; it reads VTGQSEMLKAEENRSERRERRERPEHADSAEGDDSNDSDSSDNADE. Residues 103–124 show a composition bias toward basic and acidic residues; sequence LKAEENRSERRERRERPEHADS. Residues 125 to 141 are compositionally biased toward acidic residues; that stretch reads AEGDDSNDSDSSDNADE.

Belongs to the bacterial ribosomal protein bS6 family.

Its function is as follows. Binds together with bS18 to 16S ribosomal RNA. The polypeptide is Small ribosomal subunit protein bS6 (Pseudomonas putida (strain ATCC 700007 / DSM 6899 / JCM 31910 / BCRC 17059 / LMG 24140 / F1)).